We begin with the raw amino-acid sequence, 59 residues long: UPF0434 protein Ping_0902 (59 aa).

The protein belongs to the UPF0434 family.

This is UPF0434 protein Ping_0902 from Psychromonas ingrahamii (strain DSM 17664 / CCUG 51855 / 37).